Reading from the N-terminus, the 658-residue chain is Threonine--tRNA ligase (658 aa).

The 61-residue stretch at methionine 1–glutamine 61 folds into the TGS domain. The segment at aspartate 259 to proline 554 is catalytic. The Zn(2+) site is built by cysteine 353, histidine 404, and histidine 531.

Belongs to the class-II aminoacyl-tRNA synthetase family. As to quaternary structure, homodimer. Zn(2+) serves as cofactor.

Its subcellular location is the cytoplasm. The enzyme catalyses tRNA(Thr) + L-threonine + ATP = L-threonyl-tRNA(Thr) + AMP + diphosphate + H(+). Its function is as follows. Catalyzes the attachment of threonine to tRNA(Thr) in a two-step reaction: L-threonine is first activated by ATP to form Thr-AMP and then transferred to the acceptor end of tRNA(Thr). Also edits incorrectly charged L-seryl-tRNA(Thr). The chain is Threonine--tRNA ligase from Streptomyces avermitilis (strain ATCC 31267 / DSM 46492 / JCM 5070 / NBRC 14893 / NCIMB 12804 / NRRL 8165 / MA-4680).